A 602-amino-acid polypeptide reads, in one-letter code: MKRILPLILALVAGMAQADSNSDYRAGSDFAHQIKGQGSSSIQGFKPQESIPGYNANPDETKYYGGVTAGGDGGLKNDGTTEWATGETGKTITESFMNKPKDILSPDAPFIQTGRDVVNRADSIVGNTGQQCSAQEISRSEYTNYTCERDLQVEQYCTRTARMELQGSTTWETRTLEYEMSQLPAREVNGQYVVSITSPVTGEIVDAHYSWSRTYLQKSVPMTITVLGTPLSWNAKYSADASFTPVQKTLTAGVAFTSSHPVRVGNTKFKRHTAMKLRLVVRVKKASYTPYVVWSESCPFSKELGKLTKTECTEAGGNRTLVKDGQSYSMYQSCWAYRDTYVTQSADKGTCQTYTDNPACTLVSHQCAFYSEEGACLHEYATYSCESKTSGKVMVCGGDVFCLDGECDKAQSGKSNDFAEAVSQLAALAAAGKDVAALNGVDVRAFTGQAKFCKKAAAGYSNCCKDSGWGQDIGLAKCSSDEKALAKAKSNKLTVSVGEFCSKKVLGVCLEKKRSYCQFDSKLAQIVQQQGRNGQLRISFGSAKHPDCRGITVDELQKIQFNRLDFTNFYEDLMNNQKIPDSGVLTQKVKEQIADQLKQAGQ.

A signal peptide spans 1 to 18 (MKRILPLILALVAGMAQA).

Interacts with OmpA of recipient cells. Might form multimers. May interact with TraG. In terms of processing, has higher gel mobility under non-reducing conditions, suggesting it has disulfide bonds; a dsbA deletion mutant has considerably less TraN that is still localized in the outer membrane.

The protein localises to the cell outer membrane. Its function is as follows. Essential for F plasmid conjugative transfer. May interact with the recipient cell surface to stabilize mating pairs initiated by F-pili. May interact with TraG. Transfer requires OmpA and lipopolysaccharide (LPS), which are possibly receptors for TraN. The polypeptide is Mating pair stabilization protein TraN (traN) (Escherichia coli (strain K12)).